A 90-amino-acid chain; its full sequence is Large ribosomal subunit protein bL27 (90 aa).

The segment at 1–20 (MAHKKAGGSSRNGRDSAGKR) is disordered.

It belongs to the bacterial ribosomal protein bL27 family.

The sequence is that of Large ribosomal subunit protein bL27 from Rhodopseudomonas palustris (strain BisB18).